The primary structure comprises 263 residues: Tryptophan synthase alpha chain (263 aa).

Residues E51 and D62 each act as proton acceptor in the active site.

The protein belongs to the TrpA family. As to quaternary structure, tetramer of two alpha and two beta chains.

The catalysed reaction is (1S,2R)-1-C-(indol-3-yl)glycerol 3-phosphate + L-serine = D-glyceraldehyde 3-phosphate + L-tryptophan + H2O. Its pathway is amino-acid biosynthesis; L-tryptophan biosynthesis; L-tryptophan from chorismate: step 5/5. Functionally, the alpha subunit is responsible for the aldol cleavage of indoleglycerol phosphate to indole and glyceraldehyde 3-phosphate. This is Tryptophan synthase alpha chain from Methanosarcina barkeri (strain Fusaro / DSM 804).